The primary structure comprises 188 residues: Elongation factor P (188 aa).

Lys-34 carries the N6-(3,6-diaminohexanoyl)-5-hydroxylysine modification.

Belongs to the elongation factor P family. In terms of processing, may be beta-lysylated on the epsilon-amino group of Lys-34 by the combined action of EpmA and EpmB, and then hydroxylated on the C5 position of the same residue by EpmC (if this protein is present). Lysylation is critical for the stimulatory effect of EF-P on peptide-bond formation. The lysylation moiety may extend toward the peptidyltransferase center and stabilize the terminal 3-CCA end of the tRNA. Hydroxylation of the C5 position on Lys-34 may allow additional potential stabilizing hydrogen-bond interactions with the P-tRNA.

It localises to the cytoplasm. It functions in the pathway protein biosynthesis; polypeptide chain elongation. In terms of biological role, involved in peptide bond synthesis. Alleviates ribosome stalling that occurs when 3 or more consecutive Pro residues or the sequence PPG is present in a protein, possibly by augmenting the peptidyl transferase activity of the ribosome. Modification of Lys-34 is required for alleviation. The sequence is that of Elongation factor P from Citrobacter koseri (strain ATCC BAA-895 / CDC 4225-83 / SGSC4696).